The chain runs to 290 residues: Bifunctional protein FolD (290 aa).

NADP(+)-binding positions include 169-171, I194, and I235; that span reads GAS.

It belongs to the tetrahydrofolate dehydrogenase/cyclohydrolase family. As to quaternary structure, homodimer.

It carries out the reaction (6R)-5,10-methylene-5,6,7,8-tetrahydrofolate + NADP(+) = (6R)-5,10-methenyltetrahydrofolate + NADPH. The enzyme catalyses (6R)-5,10-methenyltetrahydrofolate + H2O = (6R)-10-formyltetrahydrofolate + H(+). It participates in one-carbon metabolism; tetrahydrofolate interconversion. Catalyzes the oxidation of 5,10-methylenetetrahydrofolate to 5,10-methenyltetrahydrofolate and then the hydrolysis of 5,10-methenyltetrahydrofolate to 10-formyltetrahydrofolate. In Helicobacter pylori (strain J99 / ATCC 700824) (Campylobacter pylori J99), this protein is Bifunctional protein FolD.